Here is a 255-residue protein sequence, read N- to C-terminus: MAVISMKQLLEAGVHFGHQTRRWNPKMAKYIFTERNGIHVIDLQQTVKLADQAYEFVRDAAANDAVILFVGTKKQAAEAVADEATRAGQYFINHRWLGGTLTNWGTIQKRIARLKEIKRMEEEGTFDVLPKKEVALLNKQRARLEKFLGGIEDMPRIPDVMYVVDPHKEQIAVKEAKKLGIPVVAMVDTNADPDDIDIIIPANDDAIRAVKLITAKLADAIIEGRQGEDADVAFEADIQADSIEEIVEVVEGDNA.

This sequence belongs to the universal ribosomal protein uS2 family.

The protein is Small ribosomal subunit protein uS2 of Streptococcus pyogenes serotype M28 (strain MGAS6180).